Reading from the N-terminus, the 461-residue chain is Dihydrolipoyl dehydrogenase (461 aa).

FAD-binding positions include 34-42 (EEDQAGGTC), lysine 51, and glycine 114. Cysteines 42 and 47 form a disulfide. NAD(+) contacts are provided by residues 177 to 181 (GGGVI), glutamate 200, and 261 to 264 (AIGR). FAD contacts are provided by aspartate 304 and alanine 312. Histidine 436 serves as the catalytic Proton acceptor.

It belongs to the class-I pyridine nucleotide-disulfide oxidoreductase family. Requires FAD as cofactor.

It is found in the cytoplasm. The enzyme catalyses N(6)-[(R)-dihydrolipoyl]-L-lysyl-[protein] + NAD(+) = N(6)-[(R)-lipoyl]-L-lysyl-[protein] + NADH + H(+). Its function is as follows. The branched-chain alpha-keto dehydrogenase complex catalyzes the overall conversion of alpha-keto acids to acyl-CoA and CO(2). It contains multiple copies of 3 enzymatic components: branched-chain alpha-keto acid decarboxylase (E1), lipoamide acyltransferase (E2) and lipoamide dehydrogenase (E3). This is Dihydrolipoyl dehydrogenase (lpdA) from Chlamydia pneumoniae (Chlamydophila pneumoniae).